Reading from the N-terminus, the 353-residue chain is uncharacterized protein (353 aa).

Positions 1-23 are cleaved as a signal peptide; that stretch reads MSAGKGLLLVICLLFLPLKSAMA.

The protein to E.coli YqiI.

Functionally, may be involved in a fimbrial system chaperoned by YbgP and exported by YbgQ. This is an uncharacterized protein from Escherichia coli (strain K12).